A 183-amino-acid chain; its full sequence is Protein CT_584 (183 aa).

Belongs to the chlamydial CPn_0803/CT_584/TC_0873 family.

The polypeptide is Protein CT_584 (Chlamydia trachomatis serovar D (strain ATCC VR-885 / DSM 19411 / UW-3/Cx)).